Consider the following 170-residue polypeptide: Ribosome maturation factor RimM (170 aa).

Residues 93 to 165 form the PRC barrel domain; sequence PDEFHDHELI…RVVIDPPPGL (73 aa).

The protein belongs to the RimM family. In terms of assembly, binds ribosomal protein uS19.

Its subcellular location is the cytoplasm. In terms of biological role, an accessory protein needed during the final step in the assembly of 30S ribosomal subunit, possibly for assembly of the head region. Essential for efficient processing of 16S rRNA. May be needed both before and after RbfA during the maturation of 16S rRNA. It has affinity for free ribosomal 30S subunits but not for 70S ribosomes. The sequence is that of Ribosome maturation factor RimM from Thermobifida fusca (strain YX).